A 214-amino-acid chain; its full sequence is GSVDLQPSLNTSYLNTWALLLTLMATAFTATYSIRMTILVQAGQTRIPPMVSMNENNPLITAPLTRLALGSITAGMIITSFITPTKTPPMTMPLITKTAAILMTILGIILALELSNMTHTLTYPKPNPLMNFSSALGYFNPLVHRFFSKNLLEKGQNIALHLIDLSWLKKMGPEGLAELQVAASKAATSMHTGLIKAYLGSFALSILVMILMTH.

The next 4 membrane-spanning stretches (helical) occupy residues 14–34 (LNTW…TYSI), 58–78 (PLIT…GMII), 92–112 (MPLI…ILAL), and 192–212 (TGLI…MILM).

Belongs to the complex I subunit 5 family.

The protein resides in the mitochondrion inner membrane. It carries out the reaction a ubiquinone + NADH + 5 H(+)(in) = a ubiquinol + NAD(+) + 4 H(+)(out). Functionally, core subunit of the mitochondrial membrane respiratory chain NADH dehydrogenase (Complex I) that is believed to belong to the minimal assembly required for catalysis. Complex I functions in the transfer of electrons from NADH to the respiratory chain. The immediate electron acceptor for the enzyme is believed to be ubiquinone. The sequence is that of NADH-ubiquinone oxidoreductase chain 5 (MT-ND5) from Anser caerulescens (Snow goose).